The following is a 408-amino-acid chain: Aminoacylase-1A (408 aa).

His80 serves as a coordination point for Zn(2+). Asp82 is an active-site residue. Residue Asp113 coordinates Zn(2+). Glu147 functions as the Proton acceptor in the catalytic mechanism. Glu148, Glu175, and His373 together coordinate Zn(2+). Ser408 is subject to Phosphoserine.

It belongs to the peptidase M20A family. In terms of assembly, homodimer. It depends on Zn(2+) as a cofactor. Post-translationally, the N-terminus is blocked.

Its subcellular location is the cytoplasm. The enzyme catalyses an N-acyl-L-amino acid + H2O = an L-alpha-amino acid + a carboxylate. It catalyses the reaction an N-acetyl-L-cysteine-S-conjugate + H2O = an S-substituted L-cysteine + acetate. In terms of biological role, involved in the hydrolysis of N-acylated or N-acetylated amino acids (except L-aspartate). The polypeptide is Aminoacylase-1A (Acy1a) (Rattus norvegicus (Rat)).